Here is a 402-residue protein sequence, read N- to C-terminus: MMVHCAGCERPILDRFLLNVLDRAWHIKCVQCCECKTNLSEKCFSREGKLYCKNDFFRRFGTKCAGCAQGISPSDLVRKARSKVFHLNCFTCMVCNKQLSTGEELYVIDENKFVCKDDYLSSSSLKEGSLNSVSSCTDRSLSPDLQDPLQDDPKETDNSTSSDKETANNENEEQNSGTKRRGPRTTIKAKQLETLKAAFAATPKPTRHIREQLAQETGLNMRVIQVWFQNRRSKERRMKQLSALGARRHAFFRSPRRMRPLGGRLDESEMLGSTPYTYYGDYQSDYYAPGGNYDFFAHGPPSQAQSPADSSFLAASGPGSTPLGALEPPLAGPHGADNPRFTDMISHPDTPSPEPGLPGALHPMPGEVFSGGPSPPFPMSGTSGYSGPLSHPNPELNEAAVW.

LIM zinc-binding domains lie at 3 to 61 and 62 to 125; these read VHCA…RRFG and TKCA…SSSL. Residues 124 to 148 show a composition bias toward low complexity; the sequence is SLKEGSLNSVSSCTDRSLSPDLQDP. 2 disordered regions span residues 124 to 186 and 298 to 402; these read SLKE…PRTT and HGPP…AAVW. Basic and acidic residues predominate over residues 151–167; that stretch reads DDPKETDNSTSSDKETA. Positions 180-239 form a DNA-binding region, homeobox; the sequence is RRGPRTTIKAKQLETLKAAFAATPKPTRHIREQLAQETGLNMRVIQVWFQNRRSKERRMK. Composition is skewed to low complexity over residues 300–311 and 322–336; these read PPSQAQSPADSS and PLGA…PHGA.

The protein localises to the nucleus. In terms of biological role, plays an essential role in the regulation of neuronal differentiation and migration during development of the central nervous system. The polypeptide is LIM/homeobox protein Lhx5 (Lhx5) (Mus musculus (Mouse)).